Here is a 122-residue protein sequence, read N- to C-terminus: Large ribosomal subunit protein uL14 (122 aa).

The protein belongs to the universal ribosomal protein uL14 family. In terms of assembly, part of the 50S ribosomal subunit. Forms a cluster with proteins L3 and L19. In the 70S ribosome, L14 and L19 interact and together make contacts with the 16S rRNA in bridges B5 and B8.

Binds to 23S rRNA. Forms part of two intersubunit bridges in the 70S ribosome. The protein is Large ribosomal subunit protein uL14 of Bifidobacterium longum (strain DJO10A).